A 249-amino-acid polypeptide reads, in one-letter code: tRNA pseudouridine synthase A (249 aa).

Asp53 acts as the Nucleophile in catalysis. Position 111 (Tyr111) interacts with substrate.

Belongs to the tRNA pseudouridine synthase TruA family. In terms of assembly, homodimer.

It catalyses the reaction uridine(38/39/40) in tRNA = pseudouridine(38/39/40) in tRNA. Formation of pseudouridine at positions 38, 39 and 40 in the anticodon stem and loop of transfer RNAs. This is tRNA pseudouridine synthase A from Streptococcus pneumoniae (strain P1031).